The chain runs to 203 residues: Small ribosomal subunit protein eS1 (203 aa).

Belongs to the eukaryotic ribosomal protein eS1 family.

The protein is Small ribosomal subunit protein eS1 of Methanosarcina acetivorans (strain ATCC 35395 / DSM 2834 / JCM 12185 / C2A).